The sequence spans 915 residues: Probable LRR receptor-like serine/threonine-protein kinase At2g16250 (915 aa).

Residues 1 to 28 form the signal peptide; the sequence is MVDQRRSALGFVLLLLCLVLFFDCVVVG. Topologically, residues 29 to 451 are extracellular; sequence QTQSRFSEKL…ISRRTVIILA (423 aa). 7 N-linked (GlcNAc...) asparagine glycosylation sites follow: Asn71, Asn78, Asn101, Asn109, Asn150, Asn158, and Asn177. LRR repeat units lie at residues 102–125, 127–150, 151–174, 176–198, 199–223, 225–247, 248–271, 272–295, 297–320, 321–344, and 366–390; these read LTRL…WFGV, LLAL…TLGN, LTSL…SLGQ, LNLS…SFSS, LKNL…LGAL, KLIH…LGDL, VNLV…LRKL, SKLQ…LFSA, SQLQ…CWSL, PKLR…SYDS, and LRRF…VTGE. A glycan (N-linked (GlcNAc...) asparagine) is linked at Asn230. Asn332 carries an N-linked (GlcNAc...) asparagine glycan. Residues Asn391, Asn429, and Asn437 are each glycosylated (N-linked (GlcNAc...) asparagine). A helical transmembrane segment spans residues 452 to 472; it reads AVGGGVAFILLFVILPIILVL. Residues 473-915 are Cytoplasmic-facing; the sequence is CMRHRRRAAQ…AAYGVVEDNL (443 aa). Residues 482–503 are disordered; that stretch reads QRGNNDRPKPAGEASQQPPKGA. The 285-residue stretch at 527 to 811 folds into the Protein kinase domain; sequence FNDANLIKRG…IVNALENPLK (285 aa). ATP-binding positions include 533 to 541 and Lys555; that span reads IKRGHSGNL. Catalysis depends on Asp657, which acts as the Proton acceptor. The interval 851 to 915 is disordered; the sequence is TAVQAGATTS…AAYGVVEDNL (65 aa). Over residues 859-870 the composition is skewed to gly residues; it reads TSGGGGGGGGNG. Low complexity predominate over residues 871–892; that stretch reads LRNSGSQGSSGRNNNNNGNSSS.

This sequence belongs to the protein kinase superfamily. Ser/Thr protein kinase family.

The protein resides in the membrane. It catalyses the reaction L-seryl-[protein] + ATP = O-phospho-L-seryl-[protein] + ADP + H(+). The enzyme catalyses L-threonyl-[protein] + ATP = O-phospho-L-threonyl-[protein] + ADP + H(+). This is Probable LRR receptor-like serine/threonine-protein kinase At2g16250 from Arabidopsis thaliana (Mouse-ear cress).